The sequence spans 238 residues: Ribosomal RNA small subunit methyltransferase G (238 aa).

S-adenosyl-L-methionine contacts are provided by residues Gly-77, Phe-82, 128–129 (AE), and Arg-147. A disordered region spans residues 219–238 (KETPNKYPRKPGTPNKLPIE).

This sequence belongs to the methyltransferase superfamily. RNA methyltransferase RsmG family.

It is found in the cytoplasm. Specifically methylates the N7 position of guanine in position 535 of 16S rRNA. The chain is Ribosomal RNA small subunit methyltransferase G from Listeria monocytogenes serovar 1/2a (strain ATCC BAA-679 / EGD-e).